Here is a 429-residue protein sequence, read N- to C-terminus: 3-phosphoshikimate 1-carboxyvinyltransferase (429 aa).

K25, S26, and R30 together coordinate 3-phosphoshikimate. K25 contributes to the phosphoenolpyruvate binding site. Residues G99 and R127 each contribute to the phosphoenolpyruvate site. The 3-phosphoshikimate site is built by S173, S174, Q175, S201, D317, N340, and K344. Phosphoenolpyruvate is bound at residue Q175. The active-site Proton acceptor is the D317. The phosphoenolpyruvate site is built by R348, R390, and K415.

Belongs to the EPSP synthase family. As to quaternary structure, monomer.

Its subcellular location is the cytoplasm. The catalysed reaction is 3-phosphoshikimate + phosphoenolpyruvate = 5-O-(1-carboxyvinyl)-3-phosphoshikimate + phosphate. It participates in metabolic intermediate biosynthesis; chorismate biosynthesis; chorismate from D-erythrose 4-phosphate and phosphoenolpyruvate: step 6/7. Catalyzes the transfer of the enolpyruvyl moiety of phosphoenolpyruvate (PEP) to the 5-hydroxyl of shikimate-3-phosphate (S3P) to produce enolpyruvyl shikimate-3-phosphate and inorganic phosphate. The polypeptide is 3-phosphoshikimate 1-carboxyvinyltransferase (Pseudoalteromonas atlantica (strain T6c / ATCC BAA-1087)).